The primary structure comprises 180 residues: Alkyl hydroperoxide reductase AhpD (180 aa).

Cys-131 acts as the Proton donor in catalysis. A disulfide bond links Cys-131 and Cys-134. Cys-134 acts as the Cysteine sulfenic acid (-SOH) intermediate in catalysis.

The protein belongs to the AhpD family.

It carries out the reaction N(6)-[(R)-dihydrolipoyl]-L-lysyl-[lipoyl-carrier protein] + a hydroperoxide = N(6)-[(R)-lipoyl]-L-lysyl-[lipoyl-carrier protein] + an alcohol + H2O. Functionally, antioxidant protein with alkyl hydroperoxidase activity. Required for the reduction of the AhpC active site cysteine residues and for the regeneration of the AhpC enzyme activity. This is Alkyl hydroperoxide reductase AhpD from Beijerinckia indica subsp. indica (strain ATCC 9039 / DSM 1715 / NCIMB 8712).